A 171-amino-acid chain; its full sequence is Shikimate kinase (171 aa).

13–18 (GVGKST) contributes to the ATP binding site. Ser17 serves as a coordination point for Mg(2+). Substrate contacts are provided by Asp35, Arg59, and Gly81. Arg118 provides a ligand contact to ATP. Arg136 is a substrate binding site. Residue Arg153 coordinates ATP.

It belongs to the shikimate kinase family. Monomer. Mg(2+) serves as cofactor.

It localises to the cytoplasm. The enzyme catalyses shikimate + ATP = 3-phosphoshikimate + ADP + H(+). It participates in metabolic intermediate biosynthesis; chorismate biosynthesis; chorismate from D-erythrose 4-phosphate and phosphoenolpyruvate: step 5/7. Functionally, catalyzes the specific phosphorylation of the 3-hydroxyl group of shikimic acid using ATP as a cosubstrate. The chain is Shikimate kinase from Streptomyces coelicolor (strain ATCC BAA-471 / A3(2) / M145).